A 238-amino-acid chain; its full sequence is Pyridoxine 5'-phosphate synthase (238 aa).

N7 is a 3-amino-2-oxopropyl phosphate binding site. 9–10 (DH) contacts 1-deoxy-D-xylulose 5-phosphate. R18 contacts 3-amino-2-oxopropyl phosphate. H43 serves as the catalytic Proton acceptor. R45 and H50 together coordinate 1-deoxy-D-xylulose 5-phosphate. Residue E70 is the Proton acceptor of the active site. 1-deoxy-D-xylulose 5-phosphate is bound at residue T100. Catalysis depends on H191, which acts as the Proton donor. 3-amino-2-oxopropyl phosphate is bound by residues G192 and 213–214 (GH).

The protein belongs to the PNP synthase family. In terms of assembly, homooctamer; tetramer of dimers.

It localises to the cytoplasm. The catalysed reaction is 3-amino-2-oxopropyl phosphate + 1-deoxy-D-xylulose 5-phosphate = pyridoxine 5'-phosphate + phosphate + 2 H2O + H(+). The protein operates within cofactor biosynthesis; pyridoxine 5'-phosphate biosynthesis; pyridoxine 5'-phosphate from D-erythrose 4-phosphate: step 5/5. Catalyzes the complicated ring closure reaction between the two acyclic compounds 1-deoxy-D-xylulose-5-phosphate (DXP) and 3-amino-2-oxopropyl phosphate (1-amino-acetone-3-phosphate or AAP) to form pyridoxine 5'-phosphate (PNP) and inorganic phosphate. The polypeptide is Pyridoxine 5'-phosphate synthase (Thermosynechococcus vestitus (strain NIES-2133 / IAM M-273 / BP-1)).